We begin with the raw amino-acid sequence, 623 residues long: Pyranose 2-oxidase (623 aa).

The first 27 residues, 1-27, serve as a signal peptide directing secretion; that stretch reads MSTSSSDPFFNFTKSSFRSAAAQKASA. Positions 28–38 are excised as a propeptide; sequence TSLPPLPGPDK. Histidine 167 carries the post-translational modification Tele-8alpha-FAD histidine. Residues glutamine 448 and histidine 450 each contribute to the substrate site. Histidine 548 functions as the Proton acceptor in the catalytic mechanism. Asparagine 593 is a catalytic residue.

This sequence belongs to the GMC oxidoreductase family. In terms of assembly, homotetramer. It depends on FAD as a cofactor. Not glycosylated.

The protein resides in the periplasm. The catalysed reaction is D-glucose + O2 = 2-dehydro-D-glucose + H2O2. Catalyzes the oxidation of various aldopyranoses and disaccharides on carbon-2 to the corresponding 2-keto sugars concomitant with the reduction of O(2) to H(2)O(2). Plays an important role in lignin degradation of wood rot fungi by supplying the essential cosubstrate H(2)O(2) for the ligninolytic peroxidases, lignin peroxidase and manganese-dependent peroxidase. The preferred substrate is D-glucose which is converted to 2-dehydro-D-glucose. Also acts on D-xylose, together with D-glucose the major sugars derived from wood, on L-sorbose, D-galactose and 1,5-anhydroglucitol, a diagnostic marker of diabetes mellitus. This Trametes versicolor (White-rot fungus) protein is Pyranose 2-oxidase (P2OX).